Here is a 123-residue protein sequence, read N- to C-terminus: Chaperone protein SycN (123 aa).

Interacts with YscB to form a complex which specifically binds to YopN.

It localises to the cytoplasm. It is found in the cell inner membrane. Functionally, functions as a specific chaperone for YopN. It could facilitate the secretion and the subsequent translocation of YopN. The chain is Chaperone protein SycN (sycN) from Yersinia enterocolitica.